Consider the following 163-residue polypeptide: Sorting nexin-3 (163 aa).

The interval 1–20 (MASDQDNSGLDAPGSQFHRP) is disordered. The 118-residue stretch at 42-159 (NFLEIEVRNP…AAFVQDPNWD (118 aa)) folds into the PX domain. 5 residues coordinate a 1,2-diacyl-sn-glycero-3-phospho-(1D-myo-inositol-3-phosphate): Arg85, Ser87, Lys111, Arg116, and Arg125.

It belongs to the sorting nexin family.

The protein resides in the cytoplasm. Its subcellular location is the golgi apparatus membrane. It is found in the prevacuolar compartment membrane. Required for retention of late Golgi membrane proteins. Component of the retrieval machinery that functions by direct interaction with the cytosolic tails of certain TGN membrane proteins during the sorting/budding process at the prevacuolar compartment. Binds phosphatidylinositol 3-phosphate (PtdIns(P3)). The chain is Sorting nexin-3 (SNX3) from Gibberella zeae (strain ATCC MYA-4620 / CBS 123657 / FGSC 9075 / NRRL 31084 / PH-1) (Wheat head blight fungus).